Here is a 655-residue protein sequence, read N- to C-terminus: Protein-glucosylgalactosylhydroxylysine glucosidase (655 aa).

Substrate is bound at residue Trp-258 to Asp-259. The Proton donor role is filled by Glu-388. Lys-456–Gln-457 is a binding site for substrate.

This sequence belongs to the glycosyl hydrolase 65 family.

It catalyses the reaction (5R)-5-O-[alpha-D-glucosyl-(1-&gt;2)-beta-D-galactosyl]-5-hydroxy-L-lysyl-[collagen] + H2O = (5R)-5-O-(beta-D-galactosyl)-5-hydroxy-L-lysyl-[collagen] + D-glucose. In terms of biological role, catalyzes the hydrolysis of glucose from the disaccharide unit linked to hydroxylysine residues of collagen and collagen-like proteins. In Danio rerio (Zebrafish), this protein is Protein-glucosylgalactosylhydroxylysine glucosidase.